We begin with the raw amino-acid sequence, 3078 residues long: Homeobox-like protein HDP1 (3078 aa).

10 disordered regions span residues 1–29 (MKRG…DNSN), 59–164 (LHNS…INDN), 203–306 (SKRK…NIGK), 949–980 (NAEI…QDEN), 1323–1390 (DEDS…KDRK), 1415–1445 (SSSN…NNKN), 1939–2046 (KVND…QDKF), 2115–2216 (TNES…QYNY), 2599–2637 (AYMN…DDNI), and 2959–3019 (QQNN…NNGP). Residues 14-29 (CPSNGMASSQRNDNSN) are compositionally biased toward polar residues. A compositionally biased stretch (basic and acidic residues) spans 59-84 (LHNSSSRESKDMKLSEEPRHINEKCI). Low complexity-rich tracts occupy residues 85-94 (NDNNKINNNN) and 114-127 (NNNN…TKNN). Polar residues-rich tracts occupy residues 128-137 (IFFQTNNPDT), 148-157 (KQENTSSSLH), 209-229 (NSNN…NNIT), 237-252 (TSSI…NTVH), and 949-960 (NAEIHESNSPNH). The segment covering 1368 to 1380 (RKNKINRGSKGKH) has biased composition (basic residues). Over residues 1415-1433 (SSSNYEEGNSSSNEENNIS) the composition is skewed to low complexity. The segment covering 1434 to 1445 (TDKNISNTNNKN) has biased composition (polar residues). Positions 1939-1993 (KVNDSNNSNDANEGNNANYSNDSSNTNNNTSSSTNNSNNNTSCSSQNTTTSSENN) are enriched in low complexity. 2 stretches are compositionally biased toward basic and acidic residues: residues 2012–2021 (KDTQKEKNNL) and 2029–2046 (YEDR…QDKF). A compositionally biased stretch (polar residues) spans 2115 to 2126 (TNESIKTNSDQN). A compositionally biased stretch (low complexity) spans 2139–2160 (MNNDNYNSSYDNVHNDNDNNMV). A compositionally biased stretch (basic and acidic residues) spans 2163-2177 (DSSRQDNMEKQKSGE). Acidic residues predominate over residues 2192-2201 (NDNDNDDNND). 3 stretches are compositionally biased toward low complexity: residues 2202–2216 (NDNN…QYNY), 2602–2630 (NDNN…YSYD), and 2959–2989 (QQNN…QKNN). Positions 2990–3006 (LSEVQVSNINTPSSYNI) are enriched in polar residues. The segment at 2991 to 3078 (SEVQVSNINT…GKRRKNEDNK (88 aa)) is DNA-binding.

Homodimer.

It is found in the nucleus. Its subcellular location is the chromosome. Transcriptional regulator which binds to the DNA motifs 5'-GTGCACAC-3' (motif A) and 5'-[GTA]TGTA[CT][GA]TAC-3' (motif B) of genes essential for early gametocyte development, including those critical for the expansion of the inner membrane complex (IMC). The protein is Homeobox-like protein HDP1 of Plasmodium falciparum (isolate NF54).